We begin with the raw amino-acid sequence, 104 residues long: Large ribosomal subunit protein uL24 (104 aa).

This sequence belongs to the universal ribosomal protein uL24 family. As to quaternary structure, part of the 50S ribosomal subunit.

Functionally, one of two assembly initiator proteins, it binds directly to the 5'-end of the 23S rRNA, where it nucleates assembly of the 50S subunit. In terms of biological role, one of the proteins that surrounds the polypeptide exit tunnel on the outside of the subunit. This is Large ribosomal subunit protein uL24 from Ectopseudomonas mendocina (strain ymp) (Pseudomonas mendocina).